A 515-amino-acid chain; its full sequence is NADH-ubiquinone oxidoreductase chain 2 (515 aa).

The next 5 membrane-spanning stretches (helical) occupy residues 63–83 (WPIG…NSGS), 250–270 (VFIY…CSIA), 299–319 (FVLV…GLFI), 356–376 (AITF…AGFC), and 379–399 (FYLF…VGVV).

The protein belongs to the complex I subunit 2 family.

Its subcellular location is the mitochondrion inner membrane. It carries out the reaction a ubiquinone + NADH + 5 H(+)(in) = a ubiquinol + NAD(+) + 4 H(+)(out). In terms of biological role, core subunit of the mitochondrial membrane respiratory chain NADH dehydrogenase (Complex I) that is believed to belong to the minimal assembly required for catalysis. Complex I functions in the transfer of electrons from NADH to the respiratory chain. The immediate electron acceptor for the enzyme is believed to be ubiquinone. This Beta vulgaris (Sugar beet) protein is NADH-ubiquinone oxidoreductase chain 2 (ND2).